The following is a 98-amino-acid chain: UPF0175 protein VNG_0066H (98 aa).

It belongs to the UPF0175 family.

This is UPF0175 protein VNG_0066H from Halobacterium salinarum (strain ATCC 700922 / JCM 11081 / NRC-1) (Halobacterium halobium).